A 245-amino-acid polypeptide reads, in one-letter code: 3-dehydroquinate dehydratase (245 aa).

Residues Glu-35–Arg-37 and Arg-70 each bind 3-dehydroquinate. The Proton donor/acceptor role is filled by His-132. The active-site Schiff-base intermediate with substrate is Lys-158. The 3-dehydroquinate site is built by Arg-199, Thr-220, and Gln-224.

This sequence belongs to the type-I 3-dehydroquinase family. Homodimer.

It carries out the reaction 3-dehydroquinate = 3-dehydroshikimate + H2O. It participates in metabolic intermediate biosynthesis; chorismate biosynthesis; chorismate from D-erythrose 4-phosphate and phosphoenolpyruvate: step 3/7. Functionally, involved in the third step of the chorismate pathway, which leads to the biosynthesis of aromatic amino acids. Catalyzes the cis-dehydration of 3-dehydroquinate (DHQ) and introduces the first double bond of the aromatic ring to yield 3-dehydroshikimate. The chain is 3-dehydroquinate dehydratase from Haloquadratum walsbyi (strain DSM 16790 / HBSQ001).